Consider the following 346-residue polypeptide: Tyrosine--tRNA ligase (346 aa).

Positions 47 to 56 (PSGRIHIAQA) match the 'HIGH' region motif. The 'KMSKS' region signature appears at 230 to 234 (KMSKS). An ATP-binding site is contributed by K233.

Belongs to the class-I aminoacyl-tRNA synthetase family. As to quaternary structure, homodimer.

The catalysed reaction is tRNA(Tyr) + L-tyrosine + ATP = L-tyrosyl-tRNA(Tyr) + AMP + diphosphate + H(+). Its function is as follows. Catalyzes the attachment of tyrosine to tRNA(Tyr) in a two-step reaction: tyrosine is first activated by ATP to form Tyr-AMP and then transferred to the acceptor end of tRNA(Tyr). This chain is Tyrosine--tRNA ligase (YARS), found in Acanthamoeba polyphaga (Amoeba).